The primary structure comprises 123 residues: Small ribosomal subunit protein uS12 (123 aa).

D89 bears the 3-methylthioaspartic acid mark. Residues 100–123 form a disordered region; sequence GSLDTSGVKDRKQGRSKYGAKRPK. The segment covering 113–123 has biased composition (basic residues); the sequence is GRSKYGAKRPK.

It belongs to the universal ribosomal protein uS12 family. Part of the 30S ribosomal subunit. Contacts proteins S8 and S17. May interact with IF1 in the 30S initiation complex.

Its function is as follows. With S4 and S5 plays an important role in translational accuracy. Functionally, interacts with and stabilizes bases of the 16S rRNA that are involved in tRNA selection in the A site and with the mRNA backbone. Located at the interface of the 30S and 50S subunits, it traverses the body of the 30S subunit contacting proteins on the other side and probably holding the rRNA structure together. The combined cluster of proteins S8, S12 and S17 appears to hold together the shoulder and platform of the 30S subunit. The protein is Small ribosomal subunit protein uS12 of Pseudomonas aeruginosa (strain LESB58).